Reading from the N-terminus, the 239-residue chain is Ribosomal RNA small subunit methyltransferase G (239 aa).

Residues G77, F82, 128-129 (AE), and R147 contribute to the S-adenosyl-L-methionine site.

The protein belongs to the methyltransferase superfamily. RNA methyltransferase RsmG family.

The protein localises to the cytoplasm. In terms of biological role, specifically methylates the N7 position of guanine in position 535 of 16S rRNA. In Bacillus cereus (strain G9842), this protein is Ribosomal RNA small subunit methyltransferase G.